Here is a 185-residue protein sequence, read N- to C-terminus: MIEIRFHGRGGQGAVTAANILASAAFKEGKYVQAFPFFGVERRGAPVTAFTRIDDKPIRIKTQIYEPDVVVVLDPSLLDTVDVTAGLKDGGIVIVNTEKSKEEVLEKLKKKPGKLALVDATGIALEILGLPITNTAILGAVAKATGLVKLESVQEAIKETFSGALGEKNAKAAEEAFNKTVVYEL.

In terms of assembly, heterotetramer of one alpha, one beta, one delta and one gamma chain.

The catalysed reaction is 2 oxidized [2Fe-2S]-[ferredoxin] + pyruvate + CoA = 2 reduced [2Fe-2S]-[ferredoxin] + acetyl-CoA + CO2 + H(+). It carries out the reaction 3-methyl-2-oxobutanoate + 2 oxidized [2Fe-2S]-[ferredoxin] + CoA = 2-methylpropanoyl-CoA + 2 reduced [2Fe-2S]-[ferredoxin] + CO2 + H(+). The chain is Pyruvate/ketoisovalerate oxidoreductases common subunit gamma (porG) from Thermococcus kodakarensis (strain ATCC BAA-918 / JCM 12380 / KOD1) (Pyrococcus kodakaraensis (strain KOD1)).